Consider the following 213-residue polypeptide: Ribosomal RNA small subunit methyltransferase G (213 aa).

S-adenosyl-L-methionine contacts are provided by residues glycine 75, phenylalanine 80, 128–129 (IE), and arginine 144.

This sequence belongs to the methyltransferase superfamily. RNA methyltransferase RsmG family.

The protein resides in the cytoplasm. The enzyme catalyses guanosine(527) in 16S rRNA + S-adenosyl-L-methionine = N(7)-methylguanosine(527) in 16S rRNA + S-adenosyl-L-homocysteine. In terms of biological role, specifically methylates the N7 position of guanine in position 527 of 16S rRNA. This is Ribosomal RNA small subunit methyltransferase G from Brucella abortus (strain S19).